The sequence spans 339 residues: Anthranilate phosphoribosyltransferase (339 aa).

Residues G81, 84 to 85 (GD), S89, 91 to 94 (NVSS), 109 to 117 (KHGNRALSS), and A121 contribute to the 5-phospho-alpha-D-ribose 1-diphosphate site. G81 contacts anthranilate. S93 contacts Mg(2+). N112 is a binding site for anthranilate. R167 is a binding site for anthranilate. Mg(2+) contacts are provided by D225 and E226.

Belongs to the anthranilate phosphoribosyltransferase family. As to quaternary structure, homodimer. Requires Mg(2+) as cofactor.

The catalysed reaction is N-(5-phospho-beta-D-ribosyl)anthranilate + diphosphate = 5-phospho-alpha-D-ribose 1-diphosphate + anthranilate. It functions in the pathway amino-acid biosynthesis; L-tryptophan biosynthesis; L-tryptophan from chorismate: step 2/5. Its function is as follows. Catalyzes the transfer of the phosphoribosyl group of 5-phosphorylribose-1-pyrophosphate (PRPP) to anthranilate to yield N-(5'-phosphoribosyl)-anthranilate (PRA). This chain is Anthranilate phosphoribosyltransferase, found in Brucella abortus (strain S19).